Consider the following 174-residue polypeptide: Ribosome maturation factor RimM (174 aa).

The PRC barrel domain maps to 98–171 (EDEFYFHEII…KIKIHVMEGL (74 aa)).

This sequence belongs to the RimM family. As to quaternary structure, binds ribosomal protein uS19.

Its subcellular location is the cytoplasm. An accessory protein needed during the final step in the assembly of 30S ribosomal subunit, possibly for assembly of the head region. Essential for efficient processing of 16S rRNA. May be needed both before and after RbfA during the maturation of 16S rRNA. It has affinity for free ribosomal 30S subunits but not for 70S ribosomes. This chain is Ribosome maturation factor RimM, found in Bacillus velezensis (strain DSM 23117 / BGSC 10A6 / LMG 26770 / FZB42) (Bacillus amyloliquefaciens subsp. plantarum).